A 215-amino-acid chain; its full sequence is Protein Syd (215 aa).

This sequence belongs to the Syd family.

It is found in the cell inner membrane. Functionally, interacts with the SecY protein in vivo. May bind preferentially to an uncomplexed state of SecY, thus functioning either as a chelating agent for excess SecY in the cell or as a regulatory factor that negatively controls the translocase function. The protein is Protein Syd of Shewanella piezotolerans (strain WP3 / JCM 13877).